The primary structure comprises 444 residues: Phosphoglucosamine mutase (444 aa).

Residue S104 is the Phosphoserine intermediate of the active site. Mg(2+)-binding residues include S104, D243, D245, and D247. S104 is subject to Phosphoserine.

It belongs to the phosphohexose mutase family. It depends on Mg(2+) as a cofactor. In terms of processing, activated by phosphorylation.

The catalysed reaction is alpha-D-glucosamine 1-phosphate = D-glucosamine 6-phosphate. Its function is as follows. Catalyzes the conversion of glucosamine-6-phosphate to glucosamine-1-phosphate. The protein is Phosphoglucosamine mutase of Neisseria meningitidis serogroup C / serotype 2a (strain ATCC 700532 / DSM 15464 / FAM18).